The chain runs to 75 residues: UPF0235 protein Mflv_3569 (75 aa).

It belongs to the UPF0235 family.

In Mycolicibacterium gilvum (strain PYR-GCK) (Mycobacterium gilvum (strain PYR-GCK)), this protein is UPF0235 protein Mflv_3569.